A 165-amino-acid polypeptide reads, in one-letter code: Phosphopantetheine adenylyltransferase (165 aa).

Thr-9 contacts substrate. ATP is bound by residues 9-10 (TF) and His-17. 3 residues coordinate substrate: Lys-41, Leu-73, and Arg-87. ATP contacts are provided by residues 88–90 (GLR), Glu-98, and 123–129 (YQFISGT).

The protein belongs to the bacterial CoaD family. In terms of assembly, homohexamer. Mg(2+) is required as a cofactor.

Its subcellular location is the cytoplasm. It carries out the reaction (R)-4'-phosphopantetheine + ATP + H(+) = 3'-dephospho-CoA + diphosphate. It functions in the pathway cofactor biosynthesis; coenzyme A biosynthesis; CoA from (R)-pantothenate: step 4/5. Functionally, reversibly transfers an adenylyl group from ATP to 4'-phosphopantetheine, yielding dephospho-CoA (dPCoA) and pyrophosphate. This Polynucleobacter necessarius subsp. necessarius (strain STIR1) protein is Phosphopantetheine adenylyltransferase.